The sequence spans 133 residues: L-ectoine synthase (133 aa).

It belongs to the ectoine synthase family.

It carries out the reaction (2S)-4-acetamido-2-aminobutanoate = L-ectoine + H2O. It functions in the pathway amine and polyamine biosynthesis; ectoine biosynthesis; L-ectoine from L-aspartate 4-semialdehyde: step 3/3. Its function is as follows. Catalyzes the circularization of gamma-N-acetyl-alpha,gamma-diaminobutyric acid (ADABA) to ectoine (1,4,5,6-tetrahydro-2-methyl-4-pyrimidine carboxylic acid), which is an excellent osmoprotectant. This chain is L-ectoine synthase, found in Bordetella petrii (strain ATCC BAA-461 / DSM 12804 / CCUG 43448).